The sequence spans 192 residues: uncharacterized protein (192 aa).

In terms of domain architecture, Nudix hydrolase spans 29 to 160; sequence QRQAAVLVPI…PLDIERKQQR (132 aa). The short motif at 67–89 is the Nudix box element; sequence GAADKTDRSIIETALREAQEEVA. Residues Glu-83 and Glu-87 each contribute to the Mg(2+) site.

Belongs to the Nudix hydrolase family. PCD1 subfamily. Requires Mn(2+) as cofactor. The cofactor is Mg(2+).

In terms of biological role, probably mediates the hydrolysis of some nucleoside diphosphate derivatives. This is an uncharacterized protein from Pectobacterium atrosepticum (strain SCRI 1043 / ATCC BAA-672) (Erwinia carotovora subsp. atroseptica).